Consider the following 326-residue polypeptide: Putative cell agglutination protein pfl9 (326 aa).

The first 21 residues, 1 to 21, serve as a signal peptide directing secretion; it reads MNVVKYIIFSFALAPLLLVNA. N-linked (GlcNAc...) asparagine glycosylation occurs at N25. 2 consecutive repeat copies span residues 103–137 and 138–175. The tract at residues 103–175 is 2 X 36 AA approximate tandem repeats; the sequence is STITTTITSG…GEVEVITPSC (73 aa). The 163-residue stretch at 164–326 folds into the DIPSY domain; that stretch reads QSGEVEVITP…RANDVTLQLY (163 aa).

This sequence belongs to the mam3/map4 family.

It is found in the cell surface. Its function is as follows. May be involved in agglutination during conjugation or other aspects of colony formation. Induces flocculation when overexpressed. This Schizosaccharomyces pombe (strain 972 / ATCC 24843) (Fission yeast) protein is Putative cell agglutination protein pfl9.